Here is a 160-residue protein sequence, read N- to C-terminus: Twist-related protein 2 (160 aa).

Residues 1 to 63 (MEEGSSSPVS…GSPSAQSFEE (63 aa)) are disordered. Positions 27–37 (KRFGRKRRYSK) are enriched in basic residues. Positions 66 to 117 (SQRILANVRERQRTQSLNEAFAALRKIIPTLPSDKLSKIQTLKLAARYIDFL) constitute a bHLH domain.

In terms of assembly, efficient DNA binding requires dimerization with another bHLH protein. Forms a heterodimer with TCF3/E12. Also interacts with MEF2C. In terms of tissue distribution, in the embryo, highly expressed in chondrogenic cells. In embryonic skin, expressed in the undifferentiated mesenchymal layer beneath the epidermis which later develops into the dermis. Expressed in early myeloid cells but not in lymphoid cells in the liver. Expression also detected in the secretory ependymal epithelium of the choroid plexus primordium. In the adult, expressed in secreting glandular tissues and tubules.

The protein resides in the nucleus. It localises to the cytoplasm. Functionally, binds to the E-box consensus sequence 5'-CANNTG-3' as a heterodimer and inhibits transcriptional activation by MYOD1, MYOG, MEF2A and MEF2C. Also represses expression of pro-inflammatory cytokines such as TNFA and IL1B. Involved in postnatal glycogen storage and energy metabolism. Inhibits the premature or ectopic differentiation of preosteoblast cells during osteogenesis, possibly by changing the internal signal transduction response of osteoblasts to external growth factors. The polypeptide is Twist-related protein 2 (TWIST2) (Homo sapiens (Human)).